The sequence spans 255 residues: Pyridoxine 5'-phosphate synthase (255 aa).

3-amino-2-oxopropyl phosphate is bound by residues asparagine 8 and arginine 19. The Proton acceptor role is filled by histidine 44. Positions 46 and 51 each coordinate 1-deoxy-D-xylulose 5-phosphate. Residue glutamate 74 is the Proton acceptor of the active site. Residue threonine 111 coordinates 1-deoxy-D-xylulose 5-phosphate. Histidine 202 acts as the Proton donor in catalysis. 3-amino-2-oxopropyl phosphate contacts are provided by residues aspartate 203 and glycine 225 to histidine 226.

Belongs to the PNP synthase family. Homooctamer; tetramer of dimers.

Its subcellular location is the cytoplasm. It catalyses the reaction 3-amino-2-oxopropyl phosphate + 1-deoxy-D-xylulose 5-phosphate = pyridoxine 5'-phosphate + phosphate + 2 H2O + H(+). It functions in the pathway cofactor biosynthesis; pyridoxine 5'-phosphate biosynthesis; pyridoxine 5'-phosphate from D-erythrose 4-phosphate: step 5/5. Catalyzes the complicated ring closure reaction between the two acyclic compounds 1-deoxy-D-xylulose-5-phosphate (DXP) and 3-amino-2-oxopropyl phosphate (1-amino-acetone-3-phosphate or AAP) to form pyridoxine 5'-phosphate (PNP) and inorganic phosphate. This Xanthomonas oryzae pv. oryzae (strain PXO99A) protein is Pyridoxine 5'-phosphate synthase.